Reading from the N-terminus, the 31-residue chain is Cytochrome b6-f complex subunit 6 (31 aa).

A helical membrane pass occupies residues 4-24; sequence ITSYFGFLLAALTITSVLFIG.

This sequence belongs to the PetL family. As to quaternary structure, the 4 large subunits of the cytochrome b6-f complex are cytochrome b6, subunit IV (17 kDa polypeptide, PetD), cytochrome f and the Rieske protein, while the 4 small subunits are PetG, PetL, PetM and PetN. The complex functions as a dimer.

The protein localises to the plastid. It is found in the chloroplast thylakoid membrane. Its function is as follows. Component of the cytochrome b6-f complex, which mediates electron transfer between photosystem II (PSII) and photosystem I (PSI), cyclic electron flow around PSI, and state transitions. PetL is important for photoautotrophic growth as well as for electron transfer efficiency and stability of the cytochrome b6-f complex. This is Cytochrome b6-f complex subunit 6 from Lepidium virginicum (Virginia pepperweed).